Consider the following 398-residue polypeptide: Tyrosine--tRNA ligase (398 aa).

Positions 48–57 (PTGADIHLGH) match the 'HIGH' region motif. A 'KMSKS' region motif is present at residues 235 to 239 (KMSKS). Lysine 238 lines the ATP pocket. Residues 334-398 (VKLAYLLGAT…GKNKFMRLVP (65 aa)) form the S4 RNA-binding domain.

The protein belongs to the class-I aminoacyl-tRNA synthetase family. TyrS type 2 subfamily. Homodimer.

It localises to the cytoplasm. It catalyses the reaction tRNA(Tyr) + L-tyrosine + ATP = L-tyrosyl-tRNA(Tyr) + AMP + diphosphate + H(+). Catalyzes the attachment of tyrosine to tRNA(Tyr) in a two-step reaction: tyrosine is first activated by ATP to form Tyr-AMP and then transferred to the acceptor end of tRNA(Tyr). This is Tyrosine--tRNA ligase from Nostoc sp. (strain PCC 7120 / SAG 25.82 / UTEX 2576).